Reading from the N-terminus, the 117-residue chain is Conotoxin vil14.2 (117 aa).

The N-terminal stretch at 1-22 (MGFRVLVLVVMATTFALPFTFF) is a signal peptide. The propeptide occupies 23 to 90 (EEPGRSPFRP…FAELSVGQRR (68 aa)). Residues 53–77 (RADGQPPDMRQPEMRRPEMRRPEVR) are disordered. The segment covering 62–77 (RQPEMRRPEMRRPEVR) has biased composition (basic and acidic residues). 2 disulfides stabilise this stretch: Cys-96/Cys-116 and Cys-100/Cys-112.

This sequence belongs to the conotoxin R superfamily. In terms of tissue distribution, expressed by the venom duct.

The protein resides in the secreted. The chain is Conotoxin vil14.2 from Conus villepinii (Villepin's cone).